The following is a 413-amino-acid chain: Sulfoquinovose isomerase (413 aa).

The 6-sulfo-beta-D-quinovose site is built by R55, Y111, N172, H176, and R238. H248 serves as the catalytic Proton donor/acceptor. 4 residues coordinate 6-sulfo-beta-D-quinovose: E251, Q362, Q379, and H383. The active-site Proton donor/acceptor is H383.

This sequence belongs to the N-acylglucosamine 2-epimerase family. In terms of assembly, homohexamer.

The enzyme catalyses 6-sulfo-beta-D-quinovose = 6-deoxy-6-sulfo-D-fructose. It carries out the reaction 6-sulfo-beta-D-quinovose = 6-sulfo-D-rhamnose. With respect to regulation, significantly inhibited by Cu(2+), Fe(3+) and Co(2+). Partially inhibited by Mg(2+), Ca(2+) and Mn(2+). Also inhibited by ATP, ADP, dATP, TTP and GTP. Catalyzes the isomerization of sulfoquinovose (SQ) to 6-deoxy-6-sulfo-D-fructose (SF). Can also catalyze the interconversion of SQ and sulforhamnose (SR). Has a clear preference for beta-SQ and little-to-no activity on alpha-SQ. In vitro, can also catalyze the interconversion of mannose, fructose and glucose, or lyxose and xylulose, but has extremely low activity with glucose. In Escherichia coli (strain K12), this protein is Sulfoquinovose isomerase (yihS).